The primary structure comprises 61 residues: Alpha-conotoxin PnIB (61 aa).

The N-terminal stretch at 1 to 21 is a signal peptide; that stretch reads MGMRMMFTVFLLVVLATTVVS. Positions 22–44 are excised as a propeptide; that stretch reads FTSDRASDDGNAAASDLIALTIK. 2 disulfide bridges follow: cysteine 46–cysteine 52 and cysteine 47–cysteine 60. The tract at residues 48 to 50 is ser-Xaa-Pro motif, crucial for potent interaction with nAChR; the sequence is SLP. Sulfotyrosine is present on tyrosine 59. Cysteine 60 carries the post-translational modification Cysteine amide.

The protein belongs to the conotoxin A superfamily. Expressed by the venom duct.

Its subcellular location is the secreted. Its function is as follows. Alpha-conotoxins act on postsynaptic membranes, they bind to the nicotinic acetylcholine receptors (nAChR) and thus inhibit them. This toxin blocks mammalian nAChRs (alpha-7/CHRNA7 &gt; alpha-3-beta-2/CHRNA3-CHRNB2). The protein is Alpha-conotoxin PnIB of Conus pennaceus (Feathered cone).